The chain runs to 432 residues: Argininosuccinate lyase (432 aa).

This sequence belongs to the lyase 1 family. Argininosuccinate lyase subfamily.

It is found in the cytoplasm. The catalysed reaction is 2-(N(omega)-L-arginino)succinate = fumarate + L-arginine. The protein operates within amino-acid biosynthesis; L-arginine biosynthesis; L-arginine from L-ornithine and carbamoyl phosphate: step 3/3. The polypeptide is Argininosuccinate lyase (Xanthomonas euvesicatoria pv. vesicatoria (strain 85-10) (Xanthomonas campestris pv. vesicatoria)).